The primary structure comprises 222 residues: GTP-binding nuclear protein Ran-4 (222 aa).

The Small GTPase Ran-type domain occupies 10-174 (DLPTFKLLIV…LYLARRIAGD (165 aa)). 21-28 (DGGTGKTT) is a binding site for GTP. Residues 40–48 (HNTEPTLGV) form a switch-I region. GTP-binding positions include Gly71, 125–128 (NKVD), and 153–155 (SAK). The tract at residues 71–87 (GQEKYSGLKDAYYIHGQ) is switch-II.

The protein belongs to the small GTPase superfamily. Ran family. Found in a nuclear export complex with RanGTP, exportin and pre-miRNA.

It is found in the nucleus. GTP-binding protein involved in nucleocytoplasmic transport. Required for the import of protein into the nucleus and also for RNA export. Involved in chromatin condensation and control of cell cycle. The sequence is that of GTP-binding nuclear protein Ran-4 (RAN4) from Arabidopsis thaliana (Mouse-ear cress).